The following is a 558-amino-acid chain: MSSESEIPPLSSSTAAAEESGEKTSKKAAKKEAAKLEKLRRRQEQEEATRRTASISLEENDEFSNNYGDVTLTELQSSADPKAGKWIEAVEGKEWTDVSDLVEEMLESEVLIRGRVHTNRPTSNKLGFVVLRESGSTVQCVVSQSEKTKVGANMVKYLKQLSRESFVDVIGVVTLPKEPLTGTTQQVEIQVRKVYCINKSLAKLPLSVEDAARSEADIEASLQTPSPAARVNQDTRLNYRVLDLRTPANQAIFQLQYEVEYAFREKLRFKNFVGIHTPKLMAGSSEGGSAVFRLEYKGQPACLAQSPQLHKQMAICGDLRRVFEVGPVFRAEDSFTHRHLCEFVGLDVEMEIRKHYSEIMDLVDELFVFIFTSLNERCKKELQAVGKQYPFEPLKFLPKTLRLTFEEGVQMLKEAGVEVDPLGDLNTESERKLGQLVLEKYNTEFYILHRYPKAVRPFYTMTCADNPLYSNSFDVFIRGEEIISGAQRVHIPEVLEQRAGECGIDVKTISTYIDSFRYGAPLHGGFGVGLERVVMLFCALNNIRKTSLFPRDPQRLSP.

The span at 1–18 shows a compositional bias: low complexity; that stretch reads MSSESEIPPLSSSTAAAE. The disordered stretch occupies residues 1–57; sequence MSSESEIPPLSSSTAAAEESGEKTSKKAAKKEAAKLEKLRRRQEQEEATRRTASISL. Residue serine 2 is modified to N-acetylserine. Residues 20–50 show a composition bias toward basic and acidic residues; the sequence is SGEKTSKKAAKKEAAKLEKLRRRQEQEEATR. The OB DNA-binding region spans 110-195; it reads VLIRGRVHTN…QVEIQVRKVY (86 aa). Glutamate 286 is an L-aspartate binding site. The segment at 308–311 is aspartate; that stretch reads QLHK. Arginine 330 serves as a coordination point for L-aspartate. Residues 330–332, 338–340, and glutamate 481 contribute to the ATP site; these read RAE and RHL. Mg(2+) contacts are provided by glutamate 481 and serine 484. Serine 484 and arginine 488 together coordinate L-aspartate. 529 to 532 is a binding site for ATP; that stretch reads GLER.

The protein belongs to the class-II aminoacyl-tRNA synthetase family. Type 2 subfamily.

The protein localises to the cytoplasm. Its subcellular location is the cytosol. The protein resides in the endoplasmic reticulum. The enzyme catalyses tRNA(Asp) + L-aspartate + ATP = L-aspartyl-tRNA(Asp) + AMP + diphosphate. Its function is as follows. Catalyzes the specific attachment of an amino acid to its cognate tRNA in a 2 step reaction: the amino acid (AA) is first activated by ATP to form AA-AMP and then transferred to the acceptor end of the tRNA. Involved in the perception of beta-aminobutyric acid (BABA) and required for BABA priming effect in disease resistance. The sequence is that of Aspartate--tRNA ligase 2, cytoplasmic from Arabidopsis thaliana (Mouse-ear cress).